The following is a 1160-amino-acid chain: MAHTNLPEKFQVVIENGENILQRVYNTYKLFQNNKVKPSFFNDEKISKILKNLIAKYPELPENNDKSITGFDLLTSRAKQHLEELEDHYYTITDAYDWKEASFILMQEISSNTVSINFNNNIQLCSKFLDVLVLYGKINYLVSLIPDKKIITAVYAKLFLYTRSASEPTFSKMGRWINDIEQPFKKIQEEFRVLNDAVGHALSSFELTYAKRRVITQLRKDGALNLILKPEDIARPVQDSYRIELAYAGRIQQWILFGYLFAPGTLSTPQSIELLRFTLSECFYLSVFKDISISIHNEFNTLFKNYKSKTINLQKQKKIIKDAAQASTQEAPRKHAERRVYIRQELEAMWNLFRDKPCLLAPKINVLLAALSMAKEEIFWYFRHTDVIPPEKVKKFYNKQNEVREKRISSLLSLVDHLVQLVHTHKKMIQNYYLEYISGADILGLQKVITPQLLQNAGSIVTQAVNTIVNELKSLNANGQDYSFEGFRANWMRLGYLLQSNSCPLKESESKQITSRLNLIYTHSKNVDCLDQLLDEYGNMTQLWSYKEPLFHSFDAAIVDMTCDQPSHSMIYLKLLSQFPNHVANQFYPEEKELIGKECVELANSCLTKITNRIVSIMANTIASTFLSDEQQLADVNAAFPLLQKKKDWKPPKDFVPPIEPASESQFRNRANLEQLRSEEKNAFQLCTALNEFLDITIYDHIFVPREFLREKLGSALKQYMRQSIQPPAPTSSSSQIDINITRLSTYESQLRVFIGVLILVENHVDIDIGDLIRETILTEFYAKALGKSGRVDWFPEGEIEMNELTLHSITSYYVDLVSKKLNTPGVVFSPVKLGFISKAGTPFRAEEHADLTEMRALCDLVGPYGIKVIEREILRFILTTTTSMKEILSLNAANLEEFASNYYKPKAMELLKKFKTTDLDLIVTKSIAIGNALHLRSMIRESMKDVITDNFPYINNAVANAFDQYNRNTFMFPDFLGVDTLALDSGLNVGIADQYLKVILRKVSSEADKRIWELLPVMFSLTFYGNIWKETQYKATIDAHSNNVHVLSKTIIDLLIAFGAINSTTGNEAELFQSFKRFLEISSVNILRMFKGKQGEKFVPNEIQSVIIFLDKFTQQCPLLSKDSLEQYIPYSLIRNMYKDLYEHKNLQKQQSETSEQNF.

The protein belongs to the HEM-1/HEM-2 family. In terms of assembly, part of a Scar/WAVE complex containing brk1, scrA, abiA, pirA and napA.

Its function is as follows. Involved in regulation of actin and microtubule organization. Involved in cell adhesion. In Dictyostelium discoideum (Social amoeba), this protein is Nck-associated protein 1 homolog (napA).